The chain runs to 579 residues: Plastidial pyruvate kinase 2 (579 aa).

The N-terminal 63 residues, 1 to 63 (MAQVVATRSI…SRRVVDTTVR (63 aa)), are a transit peptide targeting the chloroplast. Residues 6–24 (ATRSIQGSMLSPNGGSVST) show a composition bias toward polar residues. The interval 6–26 (ATRSIQGSMLSPNGGSVSTRS) is disordered. Position 140 (Arg-140) interacts with substrate. Residues Asn-142, Ser-144, Asp-175, and Thr-176 each coordinate K(+). 142-145 (NMSH) is an ATP binding site. Arg-182 serves as a coordination point for ATP. Residue Lys-325 coordinates substrate. Position 327 (Glu-327) interacts with Mg(2+). Substrate-binding residues include Gly-350, Asp-351, and Thr-383. Position 351 (Asp-351) interacts with Mg(2+).

This sequence belongs to the pyruvate kinase family. As to quaternary structure, oligomer of alpha and beta subunits. Mg(2+) serves as cofactor. It depends on K(+) as a cofactor. In terms of tissue distribution, mostly expressed in seeds, and, to a lower extent, in roots, leaves (veins and trichomes), inflorescences, siliques, pollen (grains and tubes) and flowers (sepals and petals).

Its subcellular location is the plastid. It localises to the chloroplast stroma. The protein localises to the mitochondrion. The catalysed reaction is pyruvate + ATP = phosphoenolpyruvate + ADP + H(+). It participates in carbohydrate degradation; glycolysis; pyruvate from D-glyceraldehyde 3-phosphate: step 5/5. In terms of biological role, required for plastidial pyruvate kinase activity. Involved in seed oil accumulation, embryo development and seed storage compounds mobilization upon germination. The sequence is that of Plastidial pyruvate kinase 2 (PKP2) from Arabidopsis thaliana (Mouse-ear cress).